The sequence spans 413 residues: MNIYAVGGAIRDELLGVPVQDRDYVVVGATPEQMIAQGFRPVGKDFPVFLHPDTHEEYALARTERKTAAGYHGFQFHYAPDVTLDEDLARRDLTINAMAREVSPDGTLIGPVIDPFDGQRDLRARVFRHVSDAFVEDPVRILRLARFAARFADFTVADDTLALMRRMVDAGEVDALVPERVWQELARGLMEAKPSRMFAVLRDCGALARILPEVDGLWGVPQRADYHPEVDTGVHVMMVVDYAAKQRYSLPVRFAALTHDLGKATTPDDVLPRHTGHEGRSVDLLKPLCERLRVPNECRDLALVVAREHGNLHRVMEMGAAALVRFFERTDALRKPARFAEMLQACEADARGRLGLEAQPYPQAERLRVALAAARSVDAGAIARATGSDSAKIKDAVHRARIEAVAHALEIGE.

ATP-binding residues include G8 and R11. The CTP site is built by G8 and R11. Residues D21 and D23 each contribute to the Mg(2+) site. 3 residues coordinate ATP: R91, R143, and R146. CTP-binding residues include R91, R143, and R146. One can recognise an HD domain in the interval 232-333 (TGVHVMMVVD…VRFFERTDAL (102 aa)).

The protein belongs to the tRNA nucleotidyltransferase/poly(A) polymerase family. Bacterial CCA-adding enzyme type 1 subfamily. As to quaternary structure, monomer. Can also form homodimers and oligomers. Mg(2+) is required as a cofactor. The cofactor is Ni(2+).

It catalyses the reaction a tRNA precursor + 2 CTP + ATP = a tRNA with a 3' CCA end + 3 diphosphate. It carries out the reaction a tRNA with a 3' CCA end + 2 CTP + ATP = a tRNA with a 3' CCACCA end + 3 diphosphate. Catalyzes the addition and repair of the essential 3'-terminal CCA sequence in tRNAs without using a nucleic acid template. Adds these three nucleotides in the order of C, C, and A to the tRNA nucleotide-73, using CTP and ATP as substrates and producing inorganic pyrophosphate. tRNA 3'-terminal CCA addition is required both for tRNA processing and repair. Also involved in tRNA surveillance by mediating tandem CCA addition to generate a CCACCA at the 3' terminus of unstable tRNAs. While stable tRNAs receive only 3'-terminal CCA, unstable tRNAs are marked with CCACCA and rapidly degraded. The polypeptide is Multifunctional CCA protein (Burkholderia multivorans (strain ATCC 17616 / 249)).